We begin with the raw amino-acid sequence, 107 residues long: NADH-quinone oxidoreductase subunit K (107 aa).

Helical transmembrane passes span 11 to 31 (LTHY…GVLL), 36 to 56 (IVLL…FVAF), and 67 to 87 (IMVF…LALA).

This sequence belongs to the complex I subunit 4L family. As to quaternary structure, NDH-1 is composed of 14 different subunits. Subunits NuoA, H, J, K, L, M, N constitute the membrane sector of the complex.

It localises to the cell inner membrane. It carries out the reaction a quinone + NADH + 5 H(+)(in) = a quinol + NAD(+) + 4 H(+)(out). Functionally, NDH-1 shuttles electrons from NADH, via FMN and iron-sulfur (Fe-S) centers, to quinones in the respiratory chain. The immediate electron acceptor for the enzyme in this species is believed to be ubiquinone. Couples the redox reaction to proton translocation (for every two electrons transferred, four hydrogen ions are translocated across the cytoplasmic membrane), and thus conserves the redox energy in a proton gradient. In Bdellovibrio bacteriovorus (strain ATCC 15356 / DSM 50701 / NCIMB 9529 / HD100), this protein is NADH-quinone oxidoreductase subunit K.